Here is a 418-residue protein sequence, read N- to C-terminus: Sprouty-related, EVH1 domain-containing protein 2 (418 aa).

The 118-residue stretch at 5-122 (THPDDDSYIV…RGVRKAIEDL (118 aa)) folds into the WH1 domain. Positions 127–171 (TTSSSTIHNEAELGDDDVFTTATDSSSNSSQKREQPTRTISSPTS) are disordered. Residues 146-156 (TTATDSSSNSS) are compositionally biased toward polar residues. The KBD domain occupies 201–257 (PYRQVSFPDDDEEIVRINPREKIWMTGYEDYRHAPVRGKYPDPSEDADSSYVRFAKG). Ser206 is modified (phosphoserine). Tyr228 and Tyr231 each carry phosphotyrosine. The segment at 275–302 (GLGEDPKGRGGSVIKTQPSRGKSRRRKE) is disordered. One can recognise an SPR domain in the interval 308-416 (RCVYCRDMFN…CRCCGGKHKA (109 aa)).

Homodimer and heterodimer. Able to interact with SPRED1 to form heterodimers. Interacts with RAS. May interact with ZDHHC13 (via ANK repeats) and ZDHHC17 (via ANK repeats). Interacts with TESK1. Interacts with NF1. In terms of processing, phosphorylated on serine and threonine residues. Phosphorylated on tyrosine. Phosphorylation of Tyr-228 and Tyr-231 are required for ubiquitination. Ubiquitinated; leading to degradation by the proteasome. Expressed in liver, skin, small intestine, salivary gland and prostate.

It localises to the cell membrane. Its subcellular location is the cytoplasmic vesicle. The protein resides in the secretory vesicle membrane. The protein localises to the cytoplasm. In terms of biological role, negatively regulates Ras signaling pathways and downstream activation of MAP kinases. Recruits and translocates NF1 to the cell membrane, thereby enabling NF1-dependent hydrolysis of active GTP-bound Ras to inactive GDP-bound Ras. Inhibits fibroblast growth factor (FGF)-induced retinal lens fiber differentiation, probably by inhibiting FGF-mediated phosphorylation of ERK1/2. Inhibits TGFB-induced epithelial-to-mesenchymal transition in lens epithelial cells. This Homo sapiens (Human) protein is Sprouty-related, EVH1 domain-containing protein 2 (SPRED2).